We begin with the raw amino-acid sequence, 374 residues long: Beta-lytic metalloendopeptidase (374 aa).

The N-terminal stretch at 1–24 (MKKISKAGLGLALVCALATIGGNA) is a signal peptide. The propeptide occupies 25-195 (ARRATAQRRG…RQGRPGRAAV (171 aa)). Residues 128–187 (PTRQGAGDAGPRQSAAGAVRAFRRQRAGGRAARRRRVPAGLRPPVQRTAPGQGGFGPLRQ) are disordered. Residues 148–164 (AFRRQRAGGRAARRRRV) show a composition bias toward basic residues. Cysteines 261 and 307 form a disulfide. Positions 316 and 318 each coordinate Zn(2+). A disulfide bridge connects residues Cys351 and Cys364.

Belongs to the peptidase M23A family. Zn(2+) serves as cofactor.

The protein resides in the secreted. The catalysed reaction is Cleavage of N-acetylmuramoyl-|-Ala, and of the insulin B chain at 23-Gly-|-Phe-24 &gt; 18-Val-|-Cys(SO3H).. This Achromobacter lyticus protein is Beta-lytic metalloendopeptidase.